Reading from the N-terminus, the 284-residue chain is MKVFILALLALAATTAIAQLETTCSQGFGQSQQQQQPGQRQLLEQMKPCVAFLQQKCSPLRMPFLQTQVEQLSSCQIVQYQCCQQLAQIPERTRCHAIHIVVEAIIQQQSQQQWQEPQQQAQHKSMRMLLENLSLMCNIYVPVQCQQQQQLGQQQQQQLQEQLTPCTTFLQQQCSPVTVPFPQIPVDQPTSCQNVQHQCCRQLSQIPEQFRCQAIHNVAEAIRQQQPQQQWQGMYQPQQPAQLESIRMSLQALRSMCSIYIPVQCPAPTTYNIPLVATYTGGAC.

A signal peptide spans 1-18; the sequence is MKVFILALLALAATTAIA.

The protein belongs to the prolamin family. Post-translationally, contains disulfide bonds.

Its function is as follows. Seed storage protein. Might be integrated via inter-chain disulfide bonds within the glutenin polymer. The protein is Avenin-like b6 of Triticum aestivum (Wheat).